We begin with the raw amino-acid sequence, 147 residues long: UPF0306 protein YPK_3704 (147 aa).

This sequence belongs to the UPF0306 family.

This Yersinia pseudotuberculosis serotype O:3 (strain YPIII) protein is UPF0306 protein YPK_3704.